The chain runs to 196 residues: GTP cyclohydrolase-2 (196 aa).

GTP is bound at residue 49 to 53 (RVHSE). Residues cysteine 54, cysteine 65, and cysteine 67 each coordinate Zn(2+). GTP is bound by residues glutamine 70, 92–94 (EGR), and threonine 114. The active-site Proton acceptor is the aspartate 126. The active-site Nucleophile is the arginine 128. The GTP site is built by threonine 149 and lysine 154.

It belongs to the GTP cyclohydrolase II family. Homodimer. It depends on Zn(2+) as a cofactor.

The enzyme catalyses GTP + 4 H2O = 2,5-diamino-6-hydroxy-4-(5-phosphoribosylamino)-pyrimidine + formate + 2 phosphate + 3 H(+). It participates in cofactor biosynthesis; riboflavin biosynthesis; 5-amino-6-(D-ribitylamino)uracil from GTP: step 1/4. Functionally, catalyzes the conversion of GTP to 2,5-diamino-6-ribosylamino-4(3H)-pyrimidinone 5'-phosphate (DARP), formate and pyrophosphate. The protein is GTP cyclohydrolase-2 of Citrobacter koseri (strain ATCC BAA-895 / CDC 4225-83 / SGSC4696).